A 496-amino-acid polypeptide reads, in one-letter code: GTPase Der (496 aa).

EngA-type G domains are found at residues 3 to 168 (PIIA…VPEK) and 210 to 383 (IKLA…DCST). GTP is bound by residues 9–16 (GRPNVGKS), 56–60 (DTGGI), 120–123 (NKID), 216–223 (GRPNVGKS), 263–267 (DTAGV), and 328–331 (NKWD). Positions 384-468 (KRINTSLLTR…PIRIQFKESE (85 aa)) constitute a KH-like domain.

The protein belongs to the TRAFAC class TrmE-Era-EngA-EngB-Septin-like GTPase superfamily. EngA (Der) GTPase family. Associates with the 50S ribosomal subunit.

In terms of biological role, GTPase that plays an essential role in the late steps of ribosome biogenesis. The sequence is that of GTPase Der from Hamiltonella defensa subsp. Acyrthosiphon pisum (strain 5AT).